The following is a 321-amino-acid chain: Carbonic anhydrase, chloroplastic (321 aa).

Residues 1-100 (MSTASINSCL…AAARVDQITA (100 aa)) constitute a chloroplast transit peptide.

Belongs to the beta-class carbonic anhydrase family. As to quaternary structure, homohexamer.

Its subcellular location is the plastid. It localises to the chloroplast stroma. It carries out the reaction hydrogencarbonate + H(+) = CO2 + H2O. Reversible hydration of carbon dioxide. The chain is Carbonic anhydrase, chloroplastic from Nicotiana tabacum (Common tobacco).